The sequence spans 308 residues: Polyprenal reductase (308 aa).

At 1 to 2 (MT) the chain is on the cytoplasmic side. A helical membrane pass occupies residues 3 to 23 (LLALVWLLLDATFLITLLWHL). The Lumenal segment spans residues 24-65 (LQGCKSGHSLLCSVFQDLIRYGKTKTGLQRPAWLQWFDIPKR). The chain crosses the membrane as a helical span at residues 66-86 (CFWHFYCVSLIWNGCLLWILL). The Cytoplasmic portion of the chain corresponds to 87–120 (RLLLQSVPVPEWLQLVLHFLHAGSEPQILDRELS). The helical transmembrane segment at 121–141 (VILALALLWLHSLRRLLECLF) threads the bilayer. Residues 142-148 (VSVFSNG) are Lumenal-facing. The chain crosses the membrane as a helical span at residues 149–169 (VIHLVQYCFGLGYYFLIGITV). Over 170-184 (LTYCPLDRRTVSTDN) the chain is Cytoplasmic. A helical transmembrane segment spans residues 185–205 (LLTQCHWYHILGLALYIWASL). Topologically, residues 206 to 255 (HQYRCHCILAGLRKSASGNVINLNHSVPCGDWFERVSCPHYFAELLIYVS) are lumenal. A helical transmembrane segment spans residues 256–276 (IAVVFGLLNTIWWLVVLYVLL). Over 277–308 (NQALAALLCHEFYHEKFDTYPIHRKAFIPFIF) the chain is Cytoplasmic.

It belongs to the steroid 5-alpha reductase family. Polyprenal reductase subfamily.

It is found in the endoplasmic reticulum membrane. The catalysed reaction is a di-trans,poly-cis-dolichal + NADP(+) = a di-trans,poly-cis-polyprenal + NADPH + H(+). It carries out the reaction a 3-oxo-5alpha-steroid + NADP(+) = a 3-oxo-Delta(4)-steroid + NADPH + H(+). The enzyme catalyses androst-4-ene-3,17-dione + NADPH + H(+) = 5alpha-androstan-3,17-dione + NADP(+). It catalyses the reaction 17beta-hydroxy-5alpha-androstan-3-one + NADP(+) = testosterone + NADPH + H(+). It participates in protein modification; protein glycosylation. Plays a key role in early steps of protein N-linked glycosylation by being involved in the conversion of polyprenol into dolichol. Acts as a polyprenal reductase that mediates the reduction of polyprenal into dolichal in a NADP-dependent mechanism. Dolichols are required for the synthesis of dolichol-linked monosaccharides and the oligosaccharide precursor used for N-glycosylation. Also able to convert testosterone (T) into 5-alpha-dihydrotestosterone (DHT). The sequence is that of Polyprenal reductase (srd5a3) from Xenopus tropicalis (Western clawed frog).